The primary structure comprises 427 residues: Serine--tRNA ligase (427 aa).

Residue 231 to 233 coordinates L-serine; the sequence is TAE. 262 to 264 is an ATP binding site; sequence RSE. Glutamate 285 contacts L-serine. ATP is bound at residue 349–352; sequence EISS. Serine 385 serves as a coordination point for L-serine.

The protein belongs to the class-II aminoacyl-tRNA synthetase family. Type-1 seryl-tRNA synthetase subfamily. Homodimer. The tRNA molecule binds across the dimer.

It is found in the cytoplasm. The catalysed reaction is tRNA(Ser) + L-serine + ATP = L-seryl-tRNA(Ser) + AMP + diphosphate + H(+). The enzyme catalyses tRNA(Sec) + L-serine + ATP = L-seryl-tRNA(Sec) + AMP + diphosphate + H(+). Its pathway is aminoacyl-tRNA biosynthesis; selenocysteinyl-tRNA(Sec) biosynthesis; L-seryl-tRNA(Sec) from L-serine and tRNA(Sec): step 1/1. In terms of biological role, catalyzes the attachment of serine to tRNA(Ser). Is also able to aminoacylate tRNA(Sec) with serine, to form the misacylated tRNA L-seryl-tRNA(Sec), which will be further converted into selenocysteinyl-tRNA(Sec). This Listeria innocua serovar 6a (strain ATCC BAA-680 / CLIP 11262) protein is Serine--tRNA ligase.